We begin with the raw amino-acid sequence, 423 residues long: Imidazolonepropionase (423 aa).

H91 and H93 together coordinate Fe(3+). Zn(2+) contacts are provided by H91 and H93. 4-imidazolone-5-propanoate is bound by residues R100, Y163, and H193. Y163 contributes to the N-formimidoyl-L-glutamate binding site. Fe(3+) is bound at residue H257. H257 is a binding site for Zn(2+). Residue Q260 participates in 4-imidazolone-5-propanoate binding. D331 contributes to the Fe(3+) binding site. Position 331 (D331) interacts with Zn(2+). Residues N333 and G335 each coordinate N-formimidoyl-L-glutamate. T336 contributes to the 4-imidazolone-5-propanoate binding site.

Belongs to the metallo-dependent hydrolases superfamily. HutI family. Requires Zn(2+) as cofactor. The cofactor is Fe(3+).

It localises to the cytoplasm. The catalysed reaction is 4-imidazolone-5-propanoate + H2O = N-formimidoyl-L-glutamate. It functions in the pathway amino-acid degradation; L-histidine degradation into L-glutamate; N-formimidoyl-L-glutamate from L-histidine: step 3/3. Its function is as follows. Catalyzes the hydrolytic cleavage of the carbon-nitrogen bond in imidazolone-5-propanoate to yield N-formimidoyl-L-glutamate. It is the third step in the universal histidine degradation pathway. The polypeptide is Imidazolonepropionase (Bdellovibrio bacteriovorus (strain ATCC 15356 / DSM 50701 / NCIMB 9529 / HD100)).